Consider the following 215-residue polypeptide: C' protein (215 aa).

The tract at residues 12–34 (MPSFLKKILKLRGRRQEDESRSR) is disordered. The segment at 15 to 22 (FLKKILKL) is involved in self-degradation and in host STAT1 degradation.

Belongs to the respirovirus protein C family. As to quaternary structure, the different isoforms interact (via C-terminus) with unphosphorylated and phosphorylated human STAT1 (via N-terminus), favoring the formation of parallel STAT1 homodimers. The different isoforms do not interact with host STAT2. C protein interacts with L protein; this interaction has an inhibitory effect on viral transcription and replication. Post-translationally, Y1 and Y2 proteins are produced not only by alternative initiation, but also by proteolytic cleavage of C'. Only alternative initiation is detected in vitro, whereas in vivo cleavage seems to be predominant.

Its subcellular location is the host cytoplasm. The protein resides in the virion. In terms of biological role, the different isoforms prevent the establishment of cellular antiviral state by blocking the interferon-alpha/beta (IFN-alpha/beta) and IFN-gamma signaling pathways. They inhibit IFN-alpha/beta induced tyrosine phosphorylation of STAT1 and STAT2. Blocking the IFN-alpha/beta pathway requires binding to STAT1 in the cytoplasm. They inhibit IFN-gamma induced serine phosphorylation of STAT1. Block the IFN-gamma pathway by binding to and stabilizing the parallel form of the STAT1 dimer, further inducing high-molecular-weight complex (HMWC) formation and inhibition of transcription by IFN-gamma. May also have a role in preventing the cell to enter apoptosis. Modulate regulation of viral transcription and replication. Overexpression inhibits the viral RNA polymerase. The absence of all C', C, Y1 and Y2 proteins leads to viral delayed growth. Plays an important role in virion particles release. Modulates virion shape. The protein is C' protein (P/V/C) of Sendai virus (strain Z) (SeV).